Consider the following 630-residue polypeptide: WD repeat-containing protein 26 homolog (630 aa).

A compositionally biased stretch (low complexity) spans 1-13 (MQSTSSTSSGSCS). Residues 1 to 90 (MQSTSSTSSG…NNRENTSCSG (90 aa)) form a disordered region. Phosphoserine is present on residues Ser-36 and Ser-40. 2 stretches are compositionally biased toward polar residues: residues 48–57 (PSGSSAATNG) and 66–75 (IVNNNGSSSR). Residues 96–128 (SNQEIIRLIGQYLHDVGLDKSVQTLMLESGCYL) enclose the LisH domain. Positions 129–190 (EHPSATKFRE…EHLDDGNPLD (62 aa)) constitute a CTLH domain. WD repeat units follow at residues 312-351 (DHCDEVWFCKFSPDGLKLATGSKDSTVIIWDVDPYKLTLK), 359-400 (QAQL…LVVK), 404-443 (SLEDSLACGAFSRDGARFVCGGQKGQLYLCDLNGTIVDSW), 445-482 (GVRVNSIAFRADNKTILAADNHYRIRGYNFDSPRSDFD), 485-524 (REPHPIMTFSINSADRLALLNVSNQGLHLWDIEDKCLVRR), 529-569 (RQSN…PLAK), and 572-612 (GHTK…SSAT). The interval 604 to 630 (PKPNGSSATTESDDCSSSSSSSSWNMT) is disordered. The span at 609–630 (SSATTESDDCSSSSSSSSWNMT) shows a compositional bias: low complexity.

Its subcellular location is the cytoplasm. The protein resides in the mitochondrion. Its function is as follows. G-beta-like protein involved in cell signal transduction. The polypeptide is WD repeat-containing protein 26 homolog (Drosophila melanogaster (Fruit fly)).